A 288-amino-acid polypeptide reads, in one-letter code: Probable prolyl 4-hydroxylase 9 (288 aa).

At M1–K12 the chain is on the cytoplasmic side. A helical; Signal-anchor for type II membrane protein transmembrane segment spans residues L13–S33. At T34 to E288 the chain is on the lumenal side. Positions H164–D283 constitute a Fe2OG dioxygenase domain. 2 residues coordinate Fe cation: H182 and D184. N-linked (GlcNAc...) asparagine glycosylation is found at N221 and N255. H264 is a binding site for Fe cation. K274 lines the 2-oxoglutarate pocket.

The protein belongs to the P4HA family. Fe(2+) serves as cofactor. Requires L-ascorbate as cofactor.

The protein resides in the endoplasmic reticulum membrane. The protein localises to the golgi apparatus. The enzyme catalyses L-prolyl-[collagen] + 2-oxoglutarate + O2 = trans-4-hydroxy-L-prolyl-[collagen] + succinate + CO2. Its function is as follows. Catalyzes the post-translational formation of 4-hydroxyproline in -Xaa-Pro-Gly- sequences in proline-rich peptide sequences of plant glycoproteins and other proteins. Hydroxyprolines are important constituent of many plant cell wall glycoproteins such as extensins, hydroxyproline-rich glycoproteins, lectins and arabinogalactan proteins. The polypeptide is Probable prolyl 4-hydroxylase 9 (Arabidopsis thaliana (Mouse-ear cress)).